A 655-amino-acid polypeptide reads, in one-letter code: RalA-binding protein 1-A (655 aa).

The segment at 1-153 (MTECFLPPAS…KKSKDLTAAD (153 aa)) is disordered. Residues 52–68 (DILHEPPDIVSEDEKDH) are compositionally biased toward basic and acidic residues. ATP is bound at residue 69-74 (GKKKGK). Basic residues-rich tracts occupy residues 69-79 (GKKKGKFKKKE) and 102-118 (KIKR…PSFS). The segment at 102–119 (KIKRSKGIHVFKKPSFSK) is nuclear localization signal. Residues 119-150 (KKKEKDFKIKEKPKEEKHKEDKHKEKKSKDLT) are compositionally biased toward basic and acidic residues. Tandem repeats lie at residues 133–137 (EEKHK) and 138–142 (EDKHK). The segment at 133–142 (EEKHKEDKHK) is 2 X 5 AA tandem repeats of E-[D/E]-K-H-K. The mediates association with membranes and could form transmembrane domains stretch occupies residues 149–214 (LTAADVVKQW…PLVFRECIDF (66 aa)). The 197-residue stretch at 187–383 (IPLIEAAERT…PLRWSNMATM (197 aa)) folds into the Rho-GAP domain. The mediates interaction with RALA and RALB stretch occupies residues 398–495 (RRQEFLLNCL…LTEQEELVAM (98 aa)). Position 413–420 (413–420 (AGVKDLSK)) interacts with ATP. A required to maintain nuclear localization region spans residues 494–510 (AMEQYLRRQIATEKEEI). The segment at 496 to 655 (EQYLRRQIAT…GKKLSSETLI (160 aa)) is mediates interaction with REPS1 and REPS2. 2 disordered regions span residues 520 to 548 (IQSR…EEEL) and 600 to 655 (LQEE…ETLI). A compositionally biased stretch (acidic residues) spans 532–548 (EEYSSESESESEDEEEL). Basic and acidic residues predominate over residues 619 to 630 (NLPETKAPKDQP).

Interacts with the active, GTP-bound form of ralB and ralA.

The protein localises to the cell membrane. It localises to the cytoplasm. Its subcellular location is the cytosol. It is found in the cytoskeleton. The protein resides in the spindle pole. The protein localises to the nucleus. It localises to the mitochondrion. Its subcellular location is the cell projection. It is found in the lamellipodium. It catalyses the reaction an S-substituted glutathione(in) + ATP + H2O = an S-substituted glutathione(out) + ADP + phosphate + H(+). The catalysed reaction is ATP + H2O + xenobioticSide 1 = ADP + phosphate + xenobioticSide 2.. The enzyme catalyses leukotriene C4(in) + ATP + H2O = leukotriene C4(out) + ADP + phosphate + H(+). Its function is as follows. Multifunctional protein that functions as a downstream effector of ralA and ralB. As a GTPase-activating protein/GAP can inactivate CDC42 and RAC1 by stimulating their GTPase activity. As part of the Ral signaling pathway, may also regulate ligand-dependent EGF and insulin receptors-mediated endocytosis. During mitosis, may act as a scaffold protein in the phosphorylation of EPSIN/EPN1 by the mitotic kinase cyclin B-CDK1, preventing endocytosis during that phase of the cell cycle. During mitosis, also controls mitochondrial fission as an effector of ralA. Recruited to mitochondrion by ralA, acts as a scaffold to foster the mitotic kinase cyclin B-CDK1-mediated phosphorylation and activation of DNM1L. Acts on the cytoskeleton, to regulate pigment distribution and to regulate gastrulation. Functionally, could also function as a primary ATP-dependent active transporter for glutathione conjugates of electrophiles. May also actively catalyze the efflux of a wide range of substrates including xenobiotics like doxorubicin (DOX) contributing to cell multidrug resistance. The sequence is that of RalA-binding protein 1-A (ralbp1-a) from Xenopus laevis (African clawed frog).